A 239-amino-acid polypeptide reads, in one-letter code: 2,3,4,5-tetrahydropyridine-2,6-dicarboxylate N-acetyltransferase (239 aa).

Belongs to the transferase hexapeptide repeat family. DapH subfamily.

It catalyses the reaction (S)-2,3,4,5-tetrahydrodipicolinate + acetyl-CoA + H2O = L-2-acetamido-6-oxoheptanedioate + CoA. Its pathway is amino-acid biosynthesis; L-lysine biosynthesis via DAP pathway; LL-2,6-diaminopimelate from (S)-tetrahydrodipicolinate (acetylase route): step 1/3. Catalyzes the transfer of an acetyl group from acetyl-CoA to tetrahydrodipicolinate. The polypeptide is 2,3,4,5-tetrahydropyridine-2,6-dicarboxylate N-acetyltransferase (Staphylococcus saprophyticus subsp. saprophyticus (strain ATCC 15305 / DSM 20229 / NCIMB 8711 / NCTC 7292 / S-41)).